The chain runs to 634 residues: uncharacterized protein (634 aa).

Residues methionine 1–alanine 40 form the signal peptide. The Extracellular segment spans residues arginine 41 to glycine 589. Asparagine 363 is a glycosylation site (N-linked (GlcNAc...) asparagine). Residues leucine 590–phenylalanine 610 form a helical membrane-spanning segment. Residues lysine 611–valine 634 are Cytoplasmic-facing.

It localises to the membrane. This is an uncharacterized protein from Mus musculus (Mouse).